Here is a 297-residue protein sequence, read N- to C-terminus: MSSGNSSLGIIVGIDDSPAAQVAVRWAARDAELRKIPLTLVHAVSPEVATWLEVPLPPGVLRWQQDHGRHLIDDALKVVEQASLRAGPPTVHSEIVPAAAVPTLVDMSKDAVLMVVGCLGSGRWPGRLLGSVSSGLLRHAHCPVVIIHDEDSVMPHPQQAPVLVGVDGSSASELATAIAFDEASRRNVDLVALHAWSDVDVSEWPGIDWPATQSMAEQVLAERLAGWQERYPNVAITRVVVRDQPARQLVQRSEEAQLVVVGSRGRGGYAGMLVGSVGETVAQLARTPVIVARESLT.

ATP is bound by residues Gly13, Ala43, 117–123 (GCLGSGR), Arg127, 131–132 (SV), Gly165, Asp198, 262–268 (GSRGRGG), and 276–278 (SVG).

It belongs to the universal stress protein A family. Homodimer.

In terms of biological role, may play a role in the establishment of a persistent infection (latency) in the host. In Mycobacterium tuberculosis (strain CDC 1551 / Oshkosh), this protein is Universal stress protein MT2698.